The following is a 294-amino-acid chain: Cyclin-G1 (294 aa).

This sequence belongs to the cyclin family. Cyclin G subfamily. Binds to B' regulatory B subunits of protein phosphatase A (PP2A) following induction by p53 (in vitro). As to expression, highest levels in kidney, heart and skeletal muscle.

The protein localises to the nucleus. Functionally, may play a role in growth regulation. Is associated with G2/M phase arrest in response to DNA damage. May be an intermediate by which p53 mediates its role as an inhibitor of cellular proliferation. The chain is Cyclin-G1 (Ccng1) from Mus musculus (Mouse).